A 1010-amino-acid chain; its full sequence is ATP-dependent DNA/RNA helicase DHX36 (1010 aa).

The segment at 1–54 is required for recruitment to cytoplasmic stress granules; that stretch reads MSYDYHQNWGRDGGPRSSGGGYGGSYGGSHGGGHGGNRGSGGGGGGGGGRGGRG. The tract at residues 1–63 is disordered; it reads MSYDYHQNWG…GRHPGHLKGR (63 aa). The tract at residues 1–107 is required for the pre-miR-134 transport; it reads MSYDYHQNWG…IVQLLHSVQT (107 aa). A necessary for nuclear and nucleolar caps localizations region spans residues 1–202; the sequence is MSYDYHQNWG…KKTDLRYIEM (202 aa). A compositionally biased stretch (gly residues) spans 16–51; it reads RSSGGGYGGSYGGSHGGGHGGNRGSGGGGGGGGGRG. The DSM (DHX36-specific motif) stretch occupies residues 56 to 78; the sequence is HPGHLKGREIGLWYAKKQGQKNK. Residues 56–108 are required for G4-DNA- and G4-RNA-binding; the sequence is HPGHLKGREIGLWYAKKQGQKNKEAERQERAVVHMDERREEQIVQLLHSVQTK. RecA-like domain regions lie at residues 109–388 and 389–630; these read NDKD…MIHI and PGFT…DYQL. The 171-residue stretch at 219 to 389 folds into the Helicase ATP-binding domain; sequence VNMIDNHQVT…FGNCPMIHIP (171 aa). 235–240 contributes to the ATP binding site; it reads GCGKTT. The interval 267 to 319 is necessary for interaction with single-stranded DNA at the 3'-end of the G4-DNA structure; the sequence is RRISAISVAERVAAERAESCGNGNSTGYQIRLQSRLPRKQGSILYCTTGIILQ. The DEAH box motif lies at 336–339; it reads DEIH. Mg(2+)-binding residues include E337 and H339. Residues 479-649 form the Helicase C-terminal domain; sequence ALIRYIVLEE…ELCLQIKILR (171 aa). A necessary for interaction with single-stranded DNA at the 3'-end of the G4-DNA structure region spans residues 500 to 559; it reads WDNISTLHDLLMSQVMFKSDKFIIIPLHSLMPTVNQTQVFKRTPPGVRKIVIATNIAETS. Residues 519-530 carry the Nuclear localization signal motif; the sequence is DKFIIIPLHSLM. Residues S559 and 604–607 contribute to the ATP site; that span reads RAGR. Residues 631–700 are WH domain; it reads PEILRTPLEE…LGVHLARLPV (70 aa). 3 necessary for interaction with single-stranded DNA at the 3'-end of the G4-DNA structure regions span residues 640–699, 851–862, and 872–902; these read ELCL…ARLP, NLGKKRKMVKVY, and HPKS…IYLY. The OB-fold-like subdomains stretch occupies residues 843–907; the sequence is PKVAKIRLNL…SIYLYDCTEV (65 aa). Position 949 is an N6-acetyllysine (K949). S965 carries the phosphoserine modification.

In terms of assembly, found in a multi-helicase-TICAM1 complex at least composed of DHX36, DDX1, DDX21 and TICAM1; this complex exists in resting cells with or without dsRNA poly(I:C) ligand stimulation. Interacts (via C-terminus) with TICAM1 (via TIR domain). Interacts (via C-terminus) with DDX21; this interaction serves as bridges to TICAM1. Interacts with TERT; this interaction is dependent on the ability of DHX36 to bind to the G-quadruplex RNA (G4-RNA) structure present in the telomerase RNA template component (TERC). Interacts with DKC1; this interaction is dependent on the ability of DHX36 to bind to the G4-RNA structure present in TERC. Interacts with PARN; this interaction stimulates PARN to enhance uPA mRNA decay. Interacts with EXOSC3; this interaction occurs in a RNase-insensitive manner. Interacts with EXOSC10; this interaction occurs in a RNase-insensitive manner. Interacts with ILF3; this interaction occurs in a RNA-dependent manner. Interacts with ELAVL1; this interaction occurs in an RNA-dependent manner. Interacts with DDX5; this interaction occurs in a RNA-dependent manner. Interacts with DDX17; this interaction occurs in a RNA-dependent manner. Interacts with HDAC1; this interaction occurs in a RNA-dependent manner. Interacts with HDAC3; this interaction occurs in a RNA-dependent manner. Interacts with HDAC4. Interacts with AGO1. Interacts with AGO2. Interacts with ERCC6. The cofactor is Mg(2+).

It is found in the nucleus. Its subcellular location is the cytoplasm. It localises to the cytosol. The protein localises to the stress granule. The protein resides in the nucleus speckle. It is found in the chromosome. Its subcellular location is the telomere. It localises to the mitochondrion. The protein localises to the perikaryon. The protein resides in the cell projection. It is found in the dendrite. Its subcellular location is the axon. The enzyme catalyses ATP + H2O = ADP + phosphate + H(+). Its activity is regulated as follows. ATPase activity is enhanced in the presence of homomeric poly(U) RNAs, but not by double-stranded DNA (dsDNA), double-stranded RNA (dsRNA) and tRNA. Functionally, multifunctional ATP-dependent helicase that unwinds G-quadruplex (G4) structures. Plays a role in many biological processes such as genomic integrity, gene expression regulations and as a sensor to initiate antiviral responses. G4 structures correspond to helical structures containing guanine tetrads. Binds with high affinity to and unwinds G4 structures that are formed in nucleic acids (G4-DNA and G4-RNA). Plays a role in genomic integrity. Converts the G4-RNA structure present in telomerase RNA template component (TREC) into a double-stranded RNA to promote P1 helix formation that acts as a template boundary ensuring accurate reverse transcription. Plays a role in transcriptional regulation. Resolves G4-DNA structures in promoters of genes, such as YY1, KIT/c-kit and ALPL and positively regulates their expression. Plays a role in post-transcriptional regulation. Unwinds a G4-RNA structure located in the 3'-UTR polyadenylation site of the pre-mRNA TP53 and stimulates TP53 pre-mRNA 3'-end processing in response to ultraviolet (UV)-induced DNA damage. Binds to the precursor-microRNA-134 (pre-miR-134) terminal loop and regulates its transport into the synapto-dendritic compartment. Involved in the pre-miR-134-dependent inhibition of target gene expression and the control of dendritic spine size. Plays a role in the regulation of cytoplasmic mRNA translation and mRNA stability. Binds to both G4-RNA structures and alternative non-quadruplex-forming sequence within the 3'-UTR of the PITX1 mRNA regulating negatively PITX1 protein expression. Binds to both G4-RNA structure in the 5'-UTR and AU-rich elements (AREs) localized in the 3'-UTR of NKX2-5 mRNA to either stimulate protein translation or induce mRNA decay in an ELAVL1-dependent manner, respectively. Also binds to ARE sequences present in several mRNAs mediating exosome-mediated 3'-5' mRNA degradation. Involved in cytoplasmic urokinase-type plasminogen activator (uPA) mRNA decay. Component of a multi-helicase-TICAM1 complex that acts as a cytoplasmic sensor of viral double-stranded RNA (dsRNA) and plays a role in the activation of a cascade of antiviral responses including the induction of pro-inflammatory cytokines via the adapter molecule TICAM1. Required for the early embryonic development and hematopoiesis. Involved in the regulation of cardioblast differentiation and proliferation during heart development. Involved in spermatogonia differentiation. May play a role in ossification. In Bos taurus (Bovine), this protein is ATP-dependent DNA/RNA helicase DHX36.